Consider the following 253-residue polypeptide: 23S rRNA (cytidine-2'-O)-methyltransferase TlyA (253 aa).

Residues 1–73 (MRFDFFVSKR…LKLDLLSEIY (73 aa)) form the S4 RNA-binding domain.

It belongs to the TlyA family.

The catalysed reaction is cytidine(1920) in 23S rRNA + S-adenosyl-L-methionine = 2'-O-methylcytidine(1920) in 23S rRNA + S-adenosyl-L-homocysteine + H(+). Its function is as follows. Catalyzes the 2'-O-methylation at nucleotide C1920 in 23S rRNA. Enhances motility. Enhances biofilm formation. Involved in the assembly of 70S ribosomes. Involved in virulence by promoting adherence and invasion to host cells. Involved in pathogenicity by modulating secretion of host-protective chemokine interleukin 8 (IL-8). Involved in susceptibility to antibiotic capreomycin. The protein is 23S rRNA (cytidine-2'-O)-methyltransferase TlyA of Campylobacter jejuni subsp. jejuni serotype O:23/36 (strain 81-176).